Consider the following 968-residue polypeptide: Bifunctional glyoxylate cycle protein (968 aa).

Residues 1-443 (MSSAAKNFYQ…AVASQDEEIL (443 aa)) are isocitrate lyase. The tract at residues 444-968 (SLTAQNVAGD…AYDRLVSEGY (525 aa)) is malate synthase. Residue arginine 601 is the Proton acceptor of the active site. The Proton donor role is filled by aspartate 881.

This sequence in the N-terminal section; belongs to the isocitrate lyase/PEP mutase superfamily. Isocitrate lyase family. The protein in the C-terminal section; belongs to the malate synthase family. Intestinal and body wall muscle cells.

It carries out the reaction D-threo-isocitrate = glyoxylate + succinate. It catalyses the reaction glyoxylate + acetyl-CoA + H2O = (S)-malate + CoA + H(+). The protein operates within carbohydrate metabolism; glyoxylate cycle; (S)-malate from isocitrate: step 1/2. It participates in carbohydrate metabolism; glyoxylate cycle; (S)-malate from isocitrate: step 2/2. In Caenorhabditis elegans, this protein is Bifunctional glyoxylate cycle protein (icl-1).